Consider the following 88-residue polypeptide: Small ribosomal subunit protein bS20 (88 aa).

Belongs to the bacterial ribosomal protein bS20 family.

Binds directly to 16S ribosomal RNA. This chain is Small ribosomal subunit protein bS20, found in Rhodopseudomonas palustris (strain BisA53).